The chain runs to 390 residues: Phosphoglycerate kinase (390 aa).

Substrate contacts are provided by residues 21–23 (DLN), R36, 59–62 (HLGR), R114, and R147. ATP-binding positions include K198, E314, and 340-343 (GGDT).

This sequence belongs to the phosphoglycerate kinase family. As to quaternary structure, monomer.

The protein localises to the cytoplasm. The enzyme catalyses (2R)-3-phosphoglycerate + ATP = (2R)-3-phospho-glyceroyl phosphate + ADP. It participates in carbohydrate degradation; glycolysis; pyruvate from D-glyceraldehyde 3-phosphate: step 2/5. The protein is Phosphoglycerate kinase (pgk) of Buchnera aphidicola subsp. Acyrthosiphon pisum (strain APS) (Acyrthosiphon pisum symbiotic bacterium).